The chain runs to 264 residues: Thymidylate synthase (264 aa).

Arg-21 is a binding site for dUMP. His-51 provides a ligand contact to (6R)-5,10-methylene-5,6,7,8-tetrahydrofolate. 126-127 (RR) serves as a coordination point for dUMP. Residue Cys-146 is the Nucleophile of the active site. DUMP-binding positions include 166–169 (RSCD), Asn-177, and 207–209 (HLY). Asp-169 contacts (6R)-5,10-methylene-5,6,7,8-tetrahydrofolate. Ser-263 provides a ligand contact to (6R)-5,10-methylene-5,6,7,8-tetrahydrofolate.

This sequence belongs to the thymidylate synthase family. Bacterial-type ThyA subfamily. As to quaternary structure, homodimer.

It localises to the cytoplasm. It carries out the reaction dUMP + (6R)-5,10-methylene-5,6,7,8-tetrahydrofolate = 7,8-dihydrofolate + dTMP. The protein operates within pyrimidine metabolism; dTTP biosynthesis. In terms of biological role, catalyzes the reductive methylation of 2'-deoxyuridine-5'-monophosphate (dUMP) to 2'-deoxythymidine-5'-monophosphate (dTMP) while utilizing 5,10-methylenetetrahydrofolate (mTHF) as the methyl donor and reductant in the reaction, yielding dihydrofolate (DHF) as a by-product. This enzymatic reaction provides an intracellular de novo source of dTMP, an essential precursor for DNA biosynthesis. The sequence is that of Thymidylate synthase from Wigglesworthia glossinidia brevipalpis.